The following is a 1117-amino-acid chain: PR domain zinc finger protein 10 (1117 aa).

Residues 97–142 (QQTPLGGLEAKEEEDEDEDEDTEEDEEEDGEDADLDDWEPDPPRPF) are disordered. A compositionally biased stretch (acidic residues) spans 107 to 136 (KEEEDEDEDEDTEEDEEEDGEDADLDDWEP). Residues 182–300 (LPLVLYIDRF…PKQELKVWYA (119 aa)) form the SET domain. The N-terminal PR domain; essential for transcriptional activator activity stretch occupies residues 201–305 (IPKRTQLGPV…KVWYAASYAE (105 aa)). The C2H2-type 1 zinc finger occupies 329–351 (WPCYECNRRFISSEQLQQHLNSH). Lysine 354 is covalently cross-linked (Glycyl lysine isopeptide (Lys-Gly) (interchain with G-Cter in SUMO2)). Positions 361–381 (TRGRGRGRGKRRFGPGRRPGR) are enriched in basic residues. The disordered stretch occupies residues 361–386 (TRGRGRGRGKRRFGPGRRPGRPPKFI). Residue serine 398 is modified to Phosphoserine. Residue threonine 402 is modified to Phosphothreonine. Positions 440–474 (QETQSSLEHEPETHTLHLQPQHEESVVPTQSTLTA) are disordered. Basic and acidic residues predominate over residues 446–464 (LEHEPETHTLHLQPQHEES). 9 consecutive C2H2-type zinc fingers follow at residues 500 to 522 (FKCL…LRFH), 530 to 552 (LTCD…MKLH), 558 to 580 (YSCI…VAIH), 586 to 609 (FTCP…RSFH), 614 to 636 (YQCT…MLRH), 642 to 665 (FLCS…QRMH), 697 to 720 (FKCR…SKRH), 742 to 765 (YFCQ…LKNH), and 804 to 827 (VCCP…RKKH). Residues 871-1097 (QAMTELSQTL…QTTSQQQTTQ (227 aa)) form a C-terminal glutamine-rich region; essential for transcriptional activator activity region. Disordered stretches follow at residues 919–943 (VAPA…DPQP), 958–1001 (GQPL…SSVQ), and 1066–1094 (QTSA…SQQQ). Polar residues predominate over residues 924-934 (SPHQSQQSTVD).

Belongs to the class V-like SAM-binding methyltransferase superfamily.

The protein localises to the nucleus. Transcriptional activator, essential for early embryonic development and survival of embryonic stem cells (ESCs). Supports cell growth and survival during early development by transcriptionally activating the expression of the translation initiation factor EIF3B, to sustain global translation. Activates the transcription of FLNC. The polypeptide is PR domain zinc finger protein 10 (PRDM10) (Pongo abelii (Sumatran orangutan)).